Consider the following 196-residue polypeptide: MKRIGLTGNIGCGKSTVAQMFRELGAYVLDADKLIHSFYRKGHPVYEEVVKTFGKGILDEEGNIDRKKLADIVFKDEEKLRKLEEITHRALYKEIEKITKNLSEDTLFILEASLLVEKGTYKNYDKLIVVYAPYEVCKERAIKRGMSEEDFERRWKKQMPIEEKVKYADYVIDNSGSIEETYKQVKKVYEELTRDP.

One can recognise a DPCK domain in the interval arginine 3–proline 196. ATP is bound at residue glycine 11–threonine 16.

It belongs to the CoaE family.

It is found in the cytoplasm. The enzyme catalyses 3'-dephospho-CoA + ATP = ADP + CoA + H(+). It participates in cofactor biosynthesis; coenzyme A biosynthesis; CoA from (R)-pantothenate: step 5/5. Its function is as follows. Catalyzes the phosphorylation of the 3'-hydroxyl group of dephosphocoenzyme A to form coenzyme A. In Aquifex aeolicus (strain VF5), this protein is Dephospho-CoA kinase.